Reading from the N-terminus, the 86-residue chain is MALNLQDKQAIVAEVSEVAKGALSAVVADSRGVTVDKMTELRKAGREAGVYMRVVRNTLMRCVVEGTPFECLKDTFVGPTLIVFSH.

It belongs to the universal ribosomal protein uL10 family. In terms of assembly, part of the ribosomal stalk of the 50S ribosomal subunit. The N-terminus interacts with L11 and the large rRNA to form the base of the stalk. The C-terminus forms an elongated spine to which L12 dimers bind in a sequential fashion forming a multimeric L10(L12)X complex.

In terms of biological role, forms part of the ribosomal stalk, playing a central role in the interaction of the ribosome with GTP-bound translation factors. This chain is Large ribosomal subunit protein uL10 (rplJ), found in Serratia marcescens.